The primary structure comprises 235 residues: Small ribosomal subunit protein uS3 (235 aa).

A KH type-2 domain is found at 39–107 (VRKFLNKELA…PAQINIAEVK (69 aa)). The tract at residues 215-235 (AQSEQQPADKPKKAPRGKGRK) is disordered.

This sequence belongs to the universal ribosomal protein uS3 family. Part of the 30S ribosomal subunit. Forms a tight complex with proteins S10 and S14.

In terms of biological role, binds the lower part of the 30S subunit head. Binds mRNA in the 70S ribosome, positioning it for translation. This Haemophilus influenzae (strain PittEE) protein is Small ribosomal subunit protein uS3.